The chain runs to 51 residues: Large ribosomal subunit protein eL39 (51 aa).

The interval 32–51 (KGSVKQHPKMRHWRRKNLKK) is disordered. Residues 33–51 (GSVKQHPKMRHWRRKNLKK) are compositionally biased toward basic residues.

The protein belongs to the eukaryotic ribosomal protein eL39 family.

In Methanococcus maripaludis (strain C5 / ATCC BAA-1333), this protein is Large ribosomal subunit protein eL39.